The following is a 684-amino-acid chain: Dipeptidyl-peptidase 5 (684 aa).

Residues 1–24 form the signal peptide; that stretch reads MNKKIFSMMAASIIGSAAMTPSAG. WD repeat units lie at residues 87–127, 220–259, and 323–363; these read DTES…TERR, KPWSGIEDFSWSPDGQNIAYASRKKTGMAYSLSTNSDIYI, and TFDY…GKIR. Catalysis depends on charge relay system residues serine 542, aspartate 627, and histidine 659.

It belongs to the peptidase S9C family. Homodimer.

Its subcellular location is the periplasm. Catalyzes the removal of dipeptides from the N-terminus of oligopeptides. Prefers Ala and hydrophobic residues except Pro at the P1 position, and has no preference for P2 residues. Shows high dipeptidyl peptidase activity toward the synthetic substrates Lys-Ala-, Gly-Phe-, Met-Leu-, and Ser-Tyr-methylcoumaryl-7-amide (MCA), and slowly hydrolyzes Val-Tyr-MCA. Is likely involved in amino acid metabolism and bacterial growth of asaccharolytic P.gingivalis, that utilizes amino acids from extracellular proteinaceous nutrients as energy and carbon sources. The chain is Dipeptidyl-peptidase 5 from Porphyromonas gingivalis (strain ATCC 33277 / DSM 20709 / CIP 103683 / JCM 12257 / NCTC 11834 / 2561).